Here is a 269-residue protein sequence, read N- to C-terminus: Regulating synaptic membrane exocytosis protein 4 (269 aa).

The C2 domain maps to 115 to 233; the sequence is PMGDVEIGLQ…DLTTLAVGWY (119 aa). 2 positions are modified to phosphoserine: Ser254 and Ser257.

In terms of assembly, binds PPFIA3. Does not bind RAB3.

The protein localises to the synapse. In terms of biological role, regulates synaptic membrane exocytosis. The chain is Regulating synaptic membrane exocytosis protein 4 (Rims4) from Mus musculus (Mouse).